We begin with the raw amino-acid sequence, 237 residues long: Probable septum site-determining protein MinC (237 aa).

This sequence belongs to the MinC family. In terms of assembly, interacts with MinD and FtsZ.

Cell division inhibitor that blocks the formation of polar Z ring septums. Rapidly oscillates between the poles of the cell to destabilize FtsZ filaments that have formed before they mature into polar Z rings. Prevents FtsZ polymerization. In Buchnera aphidicola subsp. Acyrthosiphon pisum (strain 5A), this protein is Probable septum site-determining protein MinC.